We begin with the raw amino-acid sequence, 452 residues long: MTSYGNGFRMMAKCLLSLRSGYSVTAPVSKSMANVLWARYASTRIKTPPFPESITEGTLAQWLKQPGEYVNKDEEIASVETDKIDAPVTAPDAGVLKEQLVKEGDTITIDQDIAVIDTSAAPPEGGSAGPKKDEVKTADADAAKDLSTPQDSSKPIEEKPMPDLGAEQKESAPSSTKPAPDAKEPEFSSPKPKPAKSEPVKQSKPKATETARPSSFSRNEDRVKMNRMRLRIAERLKESQNRAASLTTFNECDMSAVVALRKKYKDEILKETGVKIGFMSFFSKACTQAMKQIPAINGSIEGEGKGDTLVYRDFCDLSIAVATPKGLVTPVIRNAESMSLLEIESAIATLGSKARAGKLAIEDMASGTFTISNGGIFGSLYGTPIINLPQTAVLGLHAIKERPVVINGQVVPRPMMYLALTYDHRMVDGREAVTFLRLVKEYIEDPAKMLLV.

The 76-residue stretch at 42–117 folds into the Lipoyl-binding domain; that stretch reads STRIKTPPFP…TIDQDIAVID (76 aa). K83 carries the post-translational modification N6-lipoyllysine. Residues 119-225 are disordered; that stretch reads SAAPPEGGSA…FSRNEDRVKM (107 aa). Composition is skewed to basic and acidic residues over residues 130-144, 154-170, and 195-209; these read PKKD…DAAK, KPIE…EQKE, and AKSE…KATE. Catalysis depends on residues H424 and D428.

It belongs to the 2-oxoacid dehydrogenase family. (R)-lipoate serves as cofactor.

The protein resides in the mitochondrion. The enzyme catalyses N(6)-[(R)-dihydrolipoyl]-L-lysyl-[protein] + succinyl-CoA = N(6)-[(R)-S(8)-succinyldihydrolipoyl]-L-lysyl-[protein] + CoA. Its pathway is amino-acid degradation; L-lysine degradation via saccharopine pathway; glutaryl-CoA from L-lysine: step 6/6. Its function is as follows. The 2-oxoglutarate dehydrogenase complex catalyzes the overall conversion of 2-oxoglutarate to succinyl-CoA and CO(2). It contains multiple copies of three enzymatic components: 2-oxoglutarate dehydrogenase (E1), dihydrolipoamide succinyltransferase (E2) and lipoamide dehydrogenase (E3). The protein is Probable dihydrolipoyllysine-residue succinyltransferase component of 2-oxoglutarate dehydrogenase complex, mitochondrial (kgd2) of Schizosaccharomyces pombe (strain 972 / ATCC 24843) (Fission yeast).